The primary structure comprises 776 residues: U3 small nucleolar RNA-associated protein 4 (776 aa).

WD repeat units follow at residues 35-40 (RCRFVD), 132-169 (LPLR…VLID), 178-214 (EHDT…RIWS), 230-266 (KVDK…KFWD), 271-308 (TLNQ…FQFS), and 417-452 (VCKL…KVFH).

In terms of assembly, interacts with snoRNA U3. Interacts with MPP10. Component of the ribosomal small subunit (SSU) processome composed of at least 40 protein subunits and snoRNA U3. In the absence of snoRNA3, forms a complex with other t-UTPs. This complex can associate with pre-18S ribosomal RNAs.

The protein localises to the nucleus. It is found in the nucleolus. Involved in nucleolar processing of pre-18S ribosomal RNA. Required for optimal pre-ribosomal RNA transcription by RNA polymerase I together with a subset of U3 proteins required for transcription (t-UTPs). This Saccharomyces cerevisiae (strain ATCC 204508 / S288c) (Baker's yeast) protein is U3 small nucleolar RNA-associated protein 4 (UTP4).